An 863-amino-acid chain; its full sequence is Potassium/sodium hyperpolarization-activated cyclic nucleotide-gated channel 2 (863 aa).

Residues 1-10 show a composition bias toward gly residues; it reads MDARGGGGRP. The disordered stretch occupies residues 1–131; sequence MDARGGGGRP…AGPAGEPRGS (131 aa). The Cytoplasmic segment spans residues 1–188; the sequence is MDARGGGGRP…PYSDFRFYWD (188 aa). Pro residues predominate over residues 17–47; sequence TPAPGPPPPPPPPAPPQPQPPPAPPPNPTTP. The span at 106–128 shows a compositional bias: low complexity; that stretch reads GAASGPSAAEEAGSEEAGPAGEP. Phosphoserine occurs at positions 119 and 134. Positions 131 to 182 are involved in subunit assembly; the sequence is SQASFLQRQFGALLQPGVNKFSLRMFGSQKAVEREQERVKSAGAWIIHPYSD. A helical transmembrane segment spans residues 189–209; sequence FTMLLFMVGNLIIIPVGITFF. Residues 210–213 are Extracellular-facing; it reads KDET. Residues 214 to 234 form a helical membrane-spanning segment; that stretch reads TAPWIVFNVVSDTFFLMDLVL. Topologically, residues 235-261 are cytoplasmic; the sequence is NFRTGIVIEDNTEIILDPEKIKKKYLR. Residues 262 to 282 traverse the membrane as a helical segment; the sequence is TWFVVDFVSSIPVDYIFLIVE. The Extracellular portion of the chain corresponds to 283-290; that stretch reads KGIDSEVY. The helical; Voltage-sensor transmembrane segment at 291-311 threads the bilayer; that stretch reads KTARALRIVRFTKILSLLRLL. The Cytoplasmic segment spans residues 312 to 342; the sequence is RLSRLIRYIHQWEEIFHMTYDLASAVMRICN. Residues 343-363 traverse the membrane as a helical segment; the sequence is LISMMLLLCHWDGCLQFLVPM. The Extracellular segment spans residues 364–386; that stretch reads LQDFPSDCWVSINNMVNHSWSEL. Residue asparagine 380 is glycosylated (N-linked (GlcNAc...) asparagine). The pore-forming intramembrane region spans 387-408; it reads YSFALFKAMSHMLCIGYGRQAP. Residues 409–413 lie on the Extracellular side of the membrane; it reads ESMTD. Residues 414-434 form a helical membrane-spanning segment; the sequence is IWLTMLSMIVGATCYAMFIGH. The Cytoplasmic portion of the chain corresponds to 435-863; sequence ATALIQSLDS…SARSRLSSNL (429 aa). Residues glycine 581, glutamate 582, cysteine 584, arginine 591, threonine 592, and arginine 632 each coordinate 3',5'-cyclic AMP. A Phosphoserine; by PKG/PRKG2 modification is found at serine 641. Position 726 is a phosphoserine (serine 726). An Omega-N-methylarginine modification is found at arginine 728. Residues 730–863 are disordered; that stretch reads VRRAPPGPLP…SARSRLSSNL (134 aa). Residues 734-755 are compositionally biased toward pro residues; that stretch reads PPGPLPPAASPGPPAASPPAAP. Residues serine 743, serine 750, and serine 757 each carry the phosphoserine modification. Composition is skewed to low complexity over residues 756–765, 778–800, and 808–834; these read SSPRAPRTSP, PALP…PSLP, and PAAS…AAPS. Phosphoserine occurs at positions 840, 842, and 847.

This sequence belongs to the potassium channel HCN family. Homotetramer. The channel is composed of a homo- or heterotetrameric complex of pore-forming subunits. Heterotetramer with HCN1. Forms an obligate 4:4 complex with accessory subunit PEX5L; regulates HCN2 cell-surface expression and cyclic nucleotide dependence. Interacts with KCNE2. Post-translationally, S-palmitoylated. In terms of processing, N-glycosylated; required for cell surface trafficking of HCN2. Phosphorylation at Ser-641 by PRKG2 shifts the voltage-dependence to more negative voltages, hence counteracting the stimulatory effect of cGMP on gating. Highly expressed in brain. Detected at low levels in heart, in ventricle, atrium and in sinoatrial node (SAN).

It localises to the cell membrane. It catalyses the reaction Na(+)(in) = Na(+)(out). The enzyme catalyses K(+)(in) = K(+)(out). The catalysed reaction is NH4(+)(in) = NH4(+)(out). With respect to regulation, activated by cAMP, and at 10-100 times higher concentrations, also by cGMP. cAMP binding causes a conformation change that leads to the assembly of an active tetramer and channel opening. In the absence of cAMP, the C-terminal region is thought to exert a tonic inhibition on the pore when HCN2 is in a non-tetrameric form. Channel activity is modulated by intracellular chloride ions and pH; acidic pH shifts the activation to more negative voltages. Phosphatidylinositol-4,5- bisphosphate (PIP(2)) acts as a ligand that allosterically opens HCN2 by shifting voltage-dependent channel activation toward depolarized potentials. Inhibited by extracellular cesium ions. Functionally, hyperpolarization-activated ion channel exhibiting weak selectivity for potassium over sodium ions. Contributes to the native pacemaker currents in heart (If) and in neurons (Ih). Can also transport ammonium in the distal nephron. Involved in the initiation of neuropathic pain in sensory neurons. The chain is Potassium/sodium hyperpolarization-activated cyclic nucleotide-gated channel 2 from Mus musculus (Mouse).